A 1197-amino-acid polypeptide reads, in one-letter code: Probable DNA polymerase (1197 aa).

This sequence belongs to the DNA polymerase type-B family.

It localises to the mitochondrion. The enzyme catalyses DNA(n) + a 2'-deoxyribonucleoside 5'-triphosphate = DNA(n+1) + diphosphate. The protein is Probable DNA polymerase of Podospora anserina (Pleurage anserina).